A 348-amino-acid chain; its full sequence is Fe-S cluster assembly protein DRE2 (348 aa).

An N-terminal SAM-like domain region spans residues methionine 1–serine 158. Positions lysine 137 to histidine 170 are disordered. The segment covering glutamine 144–proline 163 has biased composition (polar residues). The linker stretch occupies residues threonine 159 to serine 242. The residue at position 206 (serine 206) is a Phosphoserine. [2Fe-2S] cluster is bound by residues cysteine 252, cysteine 263, cysteine 266, and cysteine 268. Positions cysteine 252 to cysteine 268 are fe-S binding site A. [4Fe-4S] cluster contacts are provided by cysteine 311, cysteine 314, cysteine 322, and cysteine 325. 2 short sequence motifs (cx2C motif) span residues cysteine 311–cysteine 314 and cysteine 322–cysteine 325. The fe-S binding site B stretch occupies residues cysteine 311–cysteine 325.

The protein belongs to the anamorsin family. In terms of assembly, monomer. Interacts with TAH18. Interacts with MIA40. The cofactor is [2Fe-2S] cluster. [4Fe-4S] cluster is required as a cofactor. Post-translationally, ubiquitinated.

The protein resides in the cytoplasm. The protein localises to the mitochondrion intermembrane space. Its function is as follows. Component of the cytosolic iron-sulfur (Fe-S) protein assembly (CIA) machinery required for the maturation of extramitochondrial Fe-S proteins. Part of an electron transfer chain functioning in an early step of cytosolic Fe-S biogenesis, facilitating the de novo assembly of a [4Fe-4S] cluster on the scaffold complex CFD1-NBP35. Electrons are transferred to DRE2 from NADPH via the FAD- and FMN-containing protein TAH18. TAH18-DRE2 are also required for the assembly of the diferric tyrosyl radical cofactor of ribonucleotide reductase (RNR), probably by providing electrons for reduction during radical cofactor maturation in the catalytic small subunit RNR2. Has anti-apoptotic effects in the cell. Involved in negative control of H(2)O(2)-induced cell death. This Saccharomyces cerevisiae (strain ATCC 204508 / S288c) (Baker's yeast) protein is Fe-S cluster assembly protein DRE2.